Here is a 146-residue protein sequence, read N- to C-terminus: Large ribosomal subunit protein uL15 (146 aa).

The segment at 1–51 (MQLNTIKPAEGSKKNRRHVGRGIGSGLGKTAGRGHKGQKSRSGGFHKVGFE) is disordered. Over residues 21-31 (RGIGSGLGKTA) the composition is skewed to gly residues.

The protein belongs to the universal ribosomal protein uL15 family. As to quaternary structure, part of the 50S ribosomal subunit.

Binds to the 23S rRNA. The sequence is that of Large ribosomal subunit protein uL15 from Polynucleobacter necessarius subsp. necessarius (strain STIR1).